The chain runs to 399 residues: C-type lectin domain family 4 member M (399 aa).

Over 1-49 the chain is Cytoplasmic; sequence MSDSKEQRVQPLGLLEEDPTTSGIRLFPRDFQFQQTHGHKSSTGCLGHG. The Endocytosis signal signature appears at 14–15; that stretch reads LL. The chain crosses the membrane as a helical; Signal-anchor for type II membrane protein span at residues 50–70; the sequence is PLVLQLLSFTLLAGFLVAILV. The Extracellular portion of the chain corresponds to 71-399; that stretch reads QVYKGPSSLS…KKPTACFRDE (329 aa). Asn-92 carries an N-linked (GlcNAc...) asparagine glycan. 7 tandem repeats follow at residues 108 to 130, 131 to 153, 154 to 176, 177 to 199, 200 to 222, 223 to 245, and 246 to 268. Residues 108–269 are 7 X approximate tandem repeats; sequence KLQEIYQELT…AFERLCCRCP (162 aa). 4 cysteine pairs are disulfide-bonded: Cys-265–Cys-395, Cys-268–Cys-279, Cys-296–Cys-389, and Cys-368–Cys-381. The C-type lectin domain occupies 274-390; that stretch reads FFQGNCYFIS…CNVDNYWICK (117 aa). Ca(2+) is bound by residues Glu-359, Asn-361, Ser-363, Glu-366, Asn-377, and Asp-378. Residue Asn-361 is glycosylated (N-linked (GlcNAc...) asparagine).

Homotetramer.

Its subcellular location is the membrane. Functionally, probable pathogen-recognition receptor involved in peripheral immune surveillance in liver. May mediate the endocytosis of pathogens which are subsequently degraded in lysosomal compartments. Probably recognizes in a calcium-dependent manner high mannose N-linked oligosaccharides in a variety of pathogen antigens. Is a receptor for ICAM3, probably by binding to mannose-like carbohydrates. In Nomascus concolor (Black crested gibbon), this protein is C-type lectin domain family 4 member M (CLEC4M).